Here is a 320-residue protein sequence, read N- to C-terminus: Cytochrome f (320 aa).

Residues 1–35 (MQTRNTFSWIKEEITRSISVSLMIYIITGASISNA) form the signal peptide. Tyr-36, Cys-56, Cys-59, and His-60 together coordinate heme. Residues 286-306 (VQGLLFFLASIVFAQIFLVLK) traverse the membrane as a helical segment.

This sequence belongs to the cytochrome f family. In terms of assembly, the 4 large subunits of the cytochrome b6-f complex are cytochrome b6, subunit IV (17 kDa polypeptide, petD), cytochrome f and the Rieske protein, while the 4 small subunits are PetG, PetL, PetM and PetN. The complex functions as a dimer. Heme serves as cofactor.

The protein localises to the plastid. The protein resides in the chloroplast thylakoid membrane. In terms of biological role, component of the cytochrome b6-f complex, which mediates electron transfer between photosystem II (PSII) and photosystem I (PSI), cyclic electron flow around PSI, and state transitions. The protein is Cytochrome f of Gossypium hirsutum (Upland cotton).